A 146-amino-acid polypeptide reads, in one-letter code: MGRFIFVSFGLLVVFLSLSGSGADWPSDWSSYDLYCYRVFQEKKNWEDAEKFCTQQHTDSHLVSFDSSEEADFVASKTFPVLNYDLVWIGLGSVWNACKLQWSDGTELKYNAWSAESECITSKSIDNQWFTRSCSQTYPFVCKFQA.

Residues 1-23 (MGRFIFVSFGLLVVFLSLSGSGA) form the signal peptide. A C-type lectin domain is found at 32–143 (YDLYCYRVFQ…CSQTYPFVCK (112 aa)). 2 disulfides stabilise this stretch: C53–C142 and C119–C134.

The protein belongs to the snaclec family. Heteromultimer; disulfide-linked. Expressed by the venom gland.

It localises to the secreted. Its function is as follows. Interferes with one step of hemostasis (modulation of platelet aggregation, or coagulation cascade, for example). In Trimeresurus stejnegeri (Chinese green tree viper), this protein is Snaclec stejaggregin-B subunit beta-2.